We begin with the raw amino-acid sequence, 470 residues long: Probable G-protein coupled receptor 152 (470 aa).

The interval Met-1–Ser-25 is disordered. The Extracellular segment spans residues Met-1–Thr-33. A helical membrane pass occupies residues Val-34–Ala-54. The Cytoplasmic segment spans residues Gly-55–Arg-65. A helical membrane pass occupies residues Leu-66–Phe-86. Residues Gln-87 to Arg-105 lie on the Extracellular side of the membrane. A disulfide bond links Cys-104 and Cys-182. A helical transmembrane segment spans residues Phe-106–Ser-126. The Cytoplasmic portion of the chain corresponds to Leu-127 to Pro-148. The helical transmembrane segment at Leu-149–Phe-169 threads the bilayer. The Extracellular portion of the chain corresponds to Pro-170–Arg-194. The chain crosses the membrane as a helical span at residues Met-195–Thr-215. At Gln-216–Gln-257 the chain is on the cytoplasmic side. The chain crosses the membrane as a helical span at residues Leu-258–Val-278. The Extracellular portion of the chain corresponds to Tyr-279 to Asp-281. The helical transmembrane segment at Tyr-282 to Leu-302 threads the bilayer. Over Arg-303–Thr-470 the chain is Cytoplasmic. A disordered region spans residues Pro-322–Thr-470. 2 stretches are compositionally biased toward polar residues: residues Phe-325–Asp-335 and Ala-348–Thr-414. Over residues Pro-415–Pro-425 the composition is skewed to low complexity.

The protein belongs to the G-protein coupled receptor 1 family.

Its subcellular location is the cell membrane. Its function is as follows. Orphan receptor. This chain is Probable G-protein coupled receptor 152 (GPR152), found in Homo sapiens (Human).